The primary structure comprises 305 residues: Phosphoribosylaminoimidazole-succinocarboxamide synthase (305 aa).

It belongs to the SAICAR synthetase family.

The enzyme catalyses 5-amino-1-(5-phospho-D-ribosyl)imidazole-4-carboxylate + L-aspartate + ATP = (2S)-2-[5-amino-1-(5-phospho-beta-D-ribosyl)imidazole-4-carboxamido]succinate + ADP + phosphate + 2 H(+). Its pathway is purine metabolism; IMP biosynthesis via de novo pathway; 5-amino-1-(5-phospho-D-ribosyl)imidazole-4-carboxamide from 5-amino-1-(5-phospho-D-ribosyl)imidazole-4-carboxylate: step 1/2. The polypeptide is Phosphoribosylaminoimidazole-succinocarboxamide synthase (Albidiferax ferrireducens (strain ATCC BAA-621 / DSM 15236 / T118) (Rhodoferax ferrireducens)).